The chain runs to 70 residues: UPF0270 protein VS_2853 (70 aa).

Belongs to the UPF0270 family.

The polypeptide is UPF0270 protein VS_2853 (Vibrio atlanticus (strain LGP32) (Vibrio splendidus (strain Mel32))).